The sequence spans 1119 residues: uncharacterized protein (1119 aa).

A signal peptide spans 1–21 (MNNIYISLYIFFISYIIQLCF). Positions 170-206 (NKKKLDKEKKKNVIELKEYLEDLKKRMFDMQKRLNDI) form a coiled coil. Disordered regions lie at residues 606–627 (NNNTNNTNNNSNNNNNNNIFNN) and 782–905 (ASVQ…EHDE). Over residues 788–891 (DKGEDNNDND…EKDKSRDDNK (104 aa)) the composition is skewed to basic and acidic residues. Positions 890–920 (NKAQNNNSTDNEEHDEITEQIGFLKNHNQKY) form a coiled coil.

This is an uncharacterized protein from Plasmodium falciparum (isolate 3D7).